The primary structure comprises 143 residues: Gastrin-releasing peptide (143 aa).

Positions 1-23 (MRGPELRLVLLALVLCQAPLGPA) are cleaved as a signal peptide. The residue at position 50 (methionine 50) is a Methionine amide. Positions 54-143 (STGESRHVLE…GLKAKEGALS (90 aa)) are excised as a propeptide. Positions 91–115 (KGNSSHRSPQLKPLSTHQPTLDTED) are disordered. The segment covering 92–111 (GNSSHRSPQLKPLSTHQPTL) has biased composition (polar residues).

It belongs to the bombesin/neuromedin-B/ranatensin family.

It is found in the secreted. The protein resides in the cytoplasmic vesicle. The protein localises to the secretory vesicle lumen. It localises to the cell projection. Its subcellular location is the neuron projection. In terms of biological role, stimulates the release of gastrin and other gastrointestinal hormones. Contributes to the perception of prurient stimuli and to the transmission of itch signals in the spinal cord that promote scratching behavior. Contributes primarily to nonhistaminergic itch sensation. In one study, shown to act in the amygdala as part of an inhibitory network which inhibits memory specifically related to learned fear. In another study, shown to act on vasoactive intestinal peptide (VIP)-expressing cells in the auditory cortex, most likely via extrasynaptic diffusion from local and long-range sources, to mediate disinhibition of glutamatergic cells via VIP cell-specific GRPR signaling which leads to enhanced auditory fear memories. Contributes to the regulation of food intake. Inhibits voltage-gated sodium channels but enhances voltage-gated potassium channels in hippocampal neurons. Induces sighing by acting directly on the pre-Botzinger complex, a cluster of several thousand neurons in the ventrolateral medulla responsible for inspiration during respiratory activity. Functionally, induces an itch response through activation of receptors present on mast cells, triggering mast cell degranulation. This is Gastrin-releasing peptide (GRP) from Cavia porcellus (Guinea pig).